Reading from the N-terminus, the 314-residue chain is MRPEGSLTYRVPERLRQGFCGVGRAAQALVCASAKEGTAFRMEAVQEGAAGVESEQAALGEEAVLLLDDIMAEVEVVAEVEVVAEEEGLVERREEAQRAQQAVPGPGPMTPESALEELLAVQVELEPVNAQARKAFSRQREKMERRRKPQLDRRGAVIQSVPGFWANVIANHPQMSALITDEDEDMLSYMVSLEVEEEKHPVHLCKIMLFFRSNPYFQNKVITKEYLVNITEYRASHSTPIEWYPDYEVEAYRRRHHNSSLNFFNWFSDHNFAGSNKIAEILCKDLWRNPLQYYKRMKPPEEGTETSGDSQLLS.

This sequence belongs to the nucleosome assembly protein (NAP) family.

The protein localises to the cytoplasm. It localises to the nucleus. May be involved in sperm differentiation and proliferation. The polypeptide is Testis-specific Y-encoded protein 9 (Homo sapiens (Human)).